The sequence spans 379 residues: Alkanesulfonate monooxygenase (379 aa).

This sequence belongs to the SsuD family.

It catalyses the reaction an alkanesulfonate + FMNH2 + O2 = an aldehyde + FMN + sulfite + H2O + 2 H(+). Its function is as follows. Catalyzes the desulfonation of aliphatic sulfonates. The chain is Alkanesulfonate monooxygenase from Pseudomonas syringae pv. syringae (strain B728a).